The primary structure comprises 288 residues: Orotidine 5'-phosphate decarboxylase (288 aa).

Lysine 99 functions as the Proton donor in the catalytic mechanism.

It belongs to the OMP decarboxylase family. Type 2 subfamily.

The catalysed reaction is orotidine 5'-phosphate + H(+) = UMP + CO2. It participates in pyrimidine metabolism; UMP biosynthesis via de novo pathway; UMP from orotate: step 2/2. This Myxococcus xanthus (strain DK1622) protein is Orotidine 5'-phosphate decarboxylase (pyrF).